We begin with the raw amino-acid sequence, 281 residues long: Eukaryotic translation initiation factor 3 subunit G (281 aa).

The segment at 1–32 is disordered; the sequence is MSRPAGRTDWAEEDDETELALPSQTVVKNKDG. An RRM domain is found at 202-280; sequence ATLRVTNVSE…LILRVEFAKK (79 aa).

It belongs to the eIF-3 subunit G family. In terms of assembly, component of the eukaryotic translation initiation factor 3 (eIF-3) complex.

It localises to the cytoplasm. Functionally, RNA-binding component of the eukaryotic translation initiation factor 3 (eIF-3) complex, which is involved in protein synthesis of a specialized repertoire of mRNAs and, together with other initiation factors, stimulates binding of mRNA and methionyl-tRNAi to the 40S ribosome. The eIF-3 complex specifically targets and initiates translation of a subset of mRNAs involved in cell proliferation. This subunit can bind 18S rRNA. The protein is Eukaryotic translation initiation factor 3 subunit G of Phaeosphaeria nodorum (strain SN15 / ATCC MYA-4574 / FGSC 10173) (Glume blotch fungus).